Here is a 493-residue protein sequence, read N- to C-terminus: Transmembrane protein 184 homolog DDB_G0284525 (493 aa).

A compositionally biased stretch (polar residues) spans 1 to 10 (MTQESSSSNH). Residues 1–25 (MTQESSSSNHYVDESSFDNNNNNNN) form a disordered region. Helical transmembrane passes span 46–66 (VPAL…ATIL), 87–107 (IVRI…SLLL), 119–139 (DCYE…YGGG), 180–200 (YVLV…FGLY), 212–232 (FYNA…VVLF), 254–274 (IVVF…NFGW), and 293–313 (FLIC…FPYE). N-linked (GlcNAc...) asparagine glycosylation is found at N415 and N416.

Belongs to the TMEM184 family.

The protein localises to the cell membrane. Functionally, probable transporter. The chain is Transmembrane protein 184 homolog DDB_G0284525 (tmem184A) from Dictyostelium discoideum (Social amoeba).